The primary structure comprises 378 residues: Cln5-like protein 1 (378 aa).

An N-terminal signal peptide occupies residues methionine 1–glycine 20. Residues asparagine 63, asparagine 93, asparagine 135, asparagine 181, asparagine 220, asparagine 226, asparagine 254, and asparagine 280 are each glycosylated (N-linked (GlcNAc...) asparagine). The chain crosses the membrane as a helical span at residues tryptophan 308–isoleucine 328.

This sequence belongs to the CLN5 family.

Its subcellular location is the membrane. In Dictyostelium discoideum (Social amoeba), this protein is Cln5-like protein 1 (cln5la).